Here is a 254-residue protein sequence, read N- to C-terminus: Triosephosphate isomerase 2 (254 aa).

9–11 (NMK) provides a ligand contact to substrate. Residue His-96 is the Electrophile of the active site. Glu-168 (proton acceptor) is an active-site residue. 2 residues coordinate substrate: Gly-174 and Ser-212.

This sequence belongs to the triosephosphate isomerase family. As to quaternary structure, homodimer.

It localises to the cytoplasm. It catalyses the reaction D-glyceraldehyde 3-phosphate = dihydroxyacetone phosphate. It functions in the pathway polyol metabolism; glycerol degradation. In terms of biological role, involved in the glycerol metabolism. Catalyzes stereospecifically the conversion of dihydroxyacetone phosphate (DHAP) to D-glyceraldehyde-3-phosphate (G3P). In Listeria innocua serovar 6a (strain ATCC BAA-680 / CLIP 11262), this protein is Triosephosphate isomerase 2.